The primary structure comprises 188 residues: Ubiquitin-conjugating enzyme E2-21 kDa (188 aa).

In terms of domain architecture, UBC core spans 3–182 (STEKRLLKEY…VHYYIAKYSA (180 aa)). C119 serves as the catalytic Glycyl thioester intermediate.

It belongs to the ubiquitin-conjugating enzyme family.

It catalyses the reaction S-ubiquitinyl-[E1 ubiquitin-activating enzyme]-L-cysteine + [E2 ubiquitin-conjugating enzyme]-L-cysteine = [E1 ubiquitin-activating enzyme]-L-cysteine + S-ubiquitinyl-[E2 ubiquitin-conjugating enzyme]-L-cysteine.. It functions in the pathway protein modification; protein ubiquitination. In terms of biological role, catalyzes the covalent attachment of ubiquitin to other proteins. Essential for peroxisome biogenesis. Required for UBC4-independent ubiquitination of PEX5. In Pichia angusta (Yeast), this protein is Ubiquitin-conjugating enzyme E2-21 kDa (PEX4).